The following is a 98-amino-acid chain: NADH-ubiquinone oxidoreductase chain 4L (98 aa).

The next 3 helical transmembrane spans lie at 2-22 (TLVM…TLMF), 26-46 (LMST…MAVI), and 61-81 (IIIL…LAMV).

The protein belongs to the complex I subunit 4L family. Core subunit of respiratory chain NADH dehydrogenase (Complex I) which is composed of 45 different subunits.

It is found in the mitochondrion inner membrane. It carries out the reaction a ubiquinone + NADH + 5 H(+)(in) = a ubiquinol + NAD(+) + 4 H(+)(out). In terms of biological role, core subunit of the mitochondrial membrane respiratory chain NADH dehydrogenase (Complex I) which catalyzes electron transfer from NADH through the respiratory chain, using ubiquinone as an electron acceptor. Part of the enzyme membrane arm which is embedded in the lipid bilayer and involved in proton translocation. The sequence is that of NADH-ubiquinone oxidoreductase chain 4L (MT-ND4L) from Nyctomys sumichrasti (Sumichrast's vesper rat).